We begin with the raw amino-acid sequence, 510 residues long: 2,3-bisphosphoglycerate-independent phosphoglycerate mutase (510 aa).

Mn(2+)-binding residues include Asp12 and Ser62. The Phosphoserine intermediate role is filled by Ser62. Substrate contacts are provided by residues His123, 152–153 (RD), Arg184, Arg190, 257–260 (RADR), and Lys331. 5 residues coordinate Mn(2+): Asp399, His403, Asp440, His441, and His458.

The protein belongs to the BPG-independent phosphoglycerate mutase family. As to quaternary structure, monomer. The cofactor is Mn(2+).

The catalysed reaction is (2R)-2-phosphoglycerate = (2R)-3-phosphoglycerate. Its pathway is carbohydrate degradation; glycolysis; pyruvate from D-glyceraldehyde 3-phosphate: step 3/5. Its function is as follows. Catalyzes the interconversion of 2-phosphoglycerate and 3-phosphoglycerate. The polypeptide is 2,3-bisphosphoglycerate-independent phosphoglycerate mutase (Lawsonia intracellularis (strain PHE/MN1-00)).